A 249-amino-acid polypeptide reads, in one-letter code: Probable phosphatase Spea_1436 (249 aa).

The Zn(2+) site is built by His8, His10, His16, His41, Glu74, His102, His132, Asp193, and His195.

This sequence belongs to the PHP family. It depends on Zn(2+) as a cofactor.

This is Probable phosphatase Spea_1436 from Shewanella pealeana (strain ATCC 700345 / ANG-SQ1).